The chain runs to 481 residues: Glutamyl-tRNA(Gln) amidotransferase subunit A (481 aa).

Residues lysine 76 and serine 151 each act as charge relay system in the active site. The active-site Acyl-ester intermediate is the serine 175.

The protein belongs to the amidase family. GatA subfamily. As to quaternary structure, heterotrimer of A, B and C subunits.

It carries out the reaction L-glutamyl-tRNA(Gln) + L-glutamine + ATP + H2O = L-glutaminyl-tRNA(Gln) + L-glutamate + ADP + phosphate + H(+). Its function is as follows. Allows the formation of correctly charged Gln-tRNA(Gln) through the transamidation of misacylated Glu-tRNA(Gln) in organisms which lack glutaminyl-tRNA synthetase. The reaction takes place in the presence of glutamine and ATP through an activated gamma-phospho-Glu-tRNA(Gln). The chain is Glutamyl-tRNA(Gln) amidotransferase subunit A from Neisseria meningitidis serogroup A / serotype 4A (strain DSM 15465 / Z2491).